A 510-amino-acid polypeptide reads, in one-letter code: ATP synthase subunit alpha (510 aa).

169–176 (GDRQTGKT) contributes to the ATP binding site.

Belongs to the ATPase alpha/beta chains family. In terms of assembly, F-type ATPases have 2 components, CF(1) - the catalytic core - and CF(0) - the membrane proton channel. CF(1) has five subunits: alpha(3), beta(3), gamma(1), delta(1), epsilon(1). CF(0) has three main subunits: a(1), b(2) and c(9-12). The alpha and beta chains form an alternating ring which encloses part of the gamma chain. CF(1) is attached to CF(0) by a central stalk formed by the gamma and epsilon chains, while a peripheral stalk is formed by the delta and b chains.

The protein localises to the cell inner membrane. It carries out the reaction ATP + H2O + 4 H(+)(in) = ADP + phosphate + 5 H(+)(out). Functionally, produces ATP from ADP in the presence of a proton gradient across the membrane. The alpha chain is a regulatory subunit. The polypeptide is ATP synthase subunit alpha (Afipia carboxidovorans (strain ATCC 49405 / DSM 1227 / KCTC 32145 / OM5) (Oligotropha carboxidovorans)).